The primary structure comprises 470 residues: Maturase K (470 aa).

This sequence belongs to the intron maturase 2 family. MatK subfamily.

The protein resides in the plastid. It is found in the chloroplast. In terms of biological role, usually encoded in the trnK tRNA gene intron. Probably assists in splicing its own and other chloroplast group II introns. This chain is Maturase K, found in Nypa fruticans (Nypa palm).